A 462-amino-acid polypeptide reads, in one-letter code: 3-ketoacyl CoA thiolase 1, peroxisomal (462 aa).

Residues 1–34 (MEKAIQRQRVLLEHLQPIRHHTHDHSSSLTTSIC) constitute a peroxisome transit peptide. The Acyl-thioester intermediate role is filled by Cys138. Active-site proton acceptor residues include His393 and Cys425. A substrate-binding site is contributed by Gly427.

This sequence belongs to the thiolase-like superfamily. Thiolase family. As to quaternary structure, homodimer.

Its subcellular location is the peroxisome. It carries out the reaction an acyl-CoA + acetyl-CoA = a 3-oxoacyl-CoA + CoA. The protein operates within aromatic compound metabolism. Its pathway is lipid metabolism; fatty acid metabolism. Its function is as follows. Component of the floral volatile benzenoid/phenylpropanoid (FVBP) biosynthetic pathway. Thiolase that catalyzes the conversion of 3-oxo-3-phenylpropionyl-CoA (benzoylacetyl-CoA) to benzoyl-CoA. The protein is 3-ketoacyl CoA thiolase 1, peroxisomal of Petunia hybrida (Petunia).